The sequence spans 551 residues: Chaperonin GroEL 2 (551 aa).

ATP-binding positions include 30 to 33 (TLGP), Lys51, 87 to 91 (DGTTT), Gly415, and Asp496.

This sequence belongs to the chaperonin (HSP60) family. As to quaternary structure, forms a cylinder of 14 subunits composed of two heptameric rings stacked back-to-back. Interacts with the co-chaperonin GroES.

Its subcellular location is the cytoplasm. It catalyses the reaction ATP + H2O + a folded polypeptide = ADP + phosphate + an unfolded polypeptide.. Functionally, together with its co-chaperonin GroES, plays an essential role in assisting protein folding. The GroEL-GroES system forms a nano-cage that allows encapsulation of the non-native substrate proteins and provides a physical environment optimized to promote and accelerate protein folding. The protein is Chaperonin GroEL 2 of Rhodopseudomonas palustris (strain BisB18).